Here is a 167-residue protein sequence, read N- to C-terminus: Small ribosomal subunit protein uS5 (167 aa).

The region spanning 11 to 74 is the S5 DRBM domain; the sequence is LQEKLIAVNR…EKARRNMINV (64 aa).

The protein belongs to the universal ribosomal protein uS5 family. Part of the 30S ribosomal subunit. Contacts proteins S4 and S8.

In terms of biological role, with S4 and S12 plays an important role in translational accuracy. Located at the back of the 30S subunit body where it stabilizes the conformation of the head with respect to the body. The sequence is that of Small ribosomal subunit protein uS5 from Escherichia coli O139:H28 (strain E24377A / ETEC).